The sequence spans 159 residues: Small ribosomal subunit protein uS9 (159 aa).

The protein belongs to the universal ribosomal protein uS9 family.

The sequence is that of Small ribosomal subunit protein uS9 from Methylocella silvestris (strain DSM 15510 / CIP 108128 / LMG 27833 / NCIMB 13906 / BL2).